A 293-amino-acid chain; its full sequence is MAAVIKKVGVIGAGQMGNGIAHVAALAGFDVVLNDVSADRLKSGMATINGNLARQVSKKVVTEEAKTKALSRIVAAEKLDDLADCDLVIETAVEKEEVKRKIFHELCAVLKPEAIVASDTSSISITRLAAATDRPERFIGIHFMNPVPLMELVELIRGIATDDATFEASKEFVAKLGKQVAVSEDFPAFIVNRILLPMINEAIYTLYEGVGNVEAIDAAMKLGAHHPMGPLELADFIGLDTCLSIMQVLHEGLADSKYRPCPLLVKYVEAGWLGRKTQRGFYDYRGAKPVPTR.

It belongs to the 3-hydroxyacyl-CoA dehydrogenase family.

It carries out the reaction (3S)-3-hydroxybutanoyl-CoA + NADP(+) = acetoacetyl-CoA + NADPH + H(+). It participates in lipid metabolism; butanoate metabolism. The sequence is that of 3-hydroxybutyryl-CoA dehydrogenase (hbdA) from Bradyrhizobium diazoefficiens (strain JCM 10833 / BCRC 13528 / IAM 13628 / NBRC 14792 / USDA 110).